We begin with the raw amino-acid sequence, 382 residues long: Dual-specificity RNA methyltransferase RlmN (382 aa).

The active-site Proton acceptor is Glu-96. The region spanning Gln-102–Asp-340 is the Radical SAM core domain. Cysteines 109 and 345 form a disulfide. Cys-116, Cys-120, and Cys-123 together coordinate [4Fe-4S] cluster. S-adenosyl-L-methionine-binding positions include Gly-170 to Glu-171, Ser-202, Ser-224 to His-226, and Asn-302. Residue Cys-345 is the S-methylcysteine intermediate of the active site.

It belongs to the radical SAM superfamily. RlmN family. Requires [4Fe-4S] cluster as cofactor.

It localises to the cytoplasm. The enzyme catalyses adenosine(2503) in 23S rRNA + 2 reduced [2Fe-2S]-[ferredoxin] + 2 S-adenosyl-L-methionine = 2-methyladenosine(2503) in 23S rRNA + 5'-deoxyadenosine + L-methionine + 2 oxidized [2Fe-2S]-[ferredoxin] + S-adenosyl-L-homocysteine. The catalysed reaction is adenosine(37) in tRNA + 2 reduced [2Fe-2S]-[ferredoxin] + 2 S-adenosyl-L-methionine = 2-methyladenosine(37) in tRNA + 5'-deoxyadenosine + L-methionine + 2 oxidized [2Fe-2S]-[ferredoxin] + S-adenosyl-L-homocysteine. Specifically methylates position 2 of adenine 2503 in 23S rRNA and position 2 of adenine 37 in tRNAs. m2A2503 modification seems to play a crucial role in the proofreading step occurring at the peptidyl transferase center and thus would serve to optimize ribosomal fidelity. The sequence is that of Dual-specificity RNA methyltransferase RlmN from Ectopseudomonas mendocina (strain ymp) (Pseudomonas mendocina).